A 255-amino-acid polypeptide reads, in one-letter code: 5'-nucleotidase SurE (255 aa).

A divalent metal cation is bound by residues D8, D9, S40, and N93.

This sequence belongs to the SurE nucleotidase family. It depends on a divalent metal cation as a cofactor.

It is found in the cytoplasm. The catalysed reaction is a ribonucleoside 5'-phosphate + H2O = a ribonucleoside + phosphate. Its function is as follows. Nucleotidase that shows phosphatase activity on nucleoside 5'-monophosphates. The chain is 5'-nucleotidase SurE from Rhodopseudomonas palustris (strain BisA53).